The following is a 288-amino-acid chain: Putative N-terminal acetyltransferase 2 (288 aa).

Residues 68-90 (TEEKSSQFDENKSKSNNGKKNEP) form a disordered region.

In terms of assembly, heterooligomeric.

Its subcellular location is the cytoplasm. Functionally, maybe involved in N-terminal acetylation of proteins. N-acetylation plays a role in normal eukaryotic translation and processing, protect against proteolytic degradation and protein turnover. In Saccharomyces cerevisiae (strain ATCC 204508 / S288c) (Baker's yeast), this protein is Putative N-terminal acetyltransferase 2 (NAT2).